The chain runs to 608 residues: 1-deoxy-D-xylulose-5-phosphate synthase (608 aa).

Residues histidine 66 and 107 to 109 each bind thiamine diphosphate; that span reads GHA. Aspartate 138 lines the Mg(2+) pocket. Thiamine diphosphate-binding positions include 139-140, asparagine 167, phenylalanine 277, and glutamate 350; that span reads GA. Asparagine 167 is a Mg(2+) binding site.

Belongs to the transketolase family. DXPS subfamily. In terms of assembly, homodimer. The cofactor is Mg(2+). It depends on thiamine diphosphate as a cofactor.

It catalyses the reaction D-glyceraldehyde 3-phosphate + pyruvate + H(+) = 1-deoxy-D-xylulose 5-phosphate + CO2. Its pathway is metabolic intermediate biosynthesis; 1-deoxy-D-xylulose 5-phosphate biosynthesis; 1-deoxy-D-xylulose 5-phosphate from D-glyceraldehyde 3-phosphate and pyruvate: step 1/1. Catalyzes the acyloin condensation reaction between C atoms 2 and 3 of pyruvate and glyceraldehyde 3-phosphate to yield 1-deoxy-D-xylulose-5-phosphate (DXP). The chain is 1-deoxy-D-xylulose-5-phosphate synthase from Thermotoga petrophila (strain ATCC BAA-488 / DSM 13995 / JCM 10881 / RKU-1).